A 131-amino-acid polypeptide reads, in one-letter code: Fluoride-specific ion channel FluC (131 aa).

The next 4 helical transmembrane spans lie at 10 to 30, 36 to 56, 71 to 91, and 99 to 119; these read AAVAIGGALGAVCRYLLSGLV, FPMGTVLVNVLGSFVLGFLTW, LATVGFCGGLTTLSTMAYETV, and VLSILYLTANVVLGIAAVLGG. Residues Gly78 and Thr81 each coordinate Na(+).

It belongs to the fluoride channel Fluc/FEX (TC 1.A.43) family.

The protein localises to the cell membrane. The enzyme catalyses fluoride(in) = fluoride(out). Na(+) is not transported, but it plays an essential structural role and its presence is essential for fluoride channel function. Functionally, fluoride-specific ion channel. Important for reducing fluoride concentration in the cell, thus reducing its toxicity. The polypeptide is Fluoride-specific ion channel FluC (Methanopyrus kandleri (strain AV19 / DSM 6324 / JCM 9639 / NBRC 100938)).